Consider the following 101-residue polypeptide: Large ribosomal subunit protein uL24 (101 aa).

This sequence belongs to the universal ribosomal protein uL24 family. Part of the 50S ribosomal subunit.

One of two assembly initiator proteins, it binds directly to the 5'-end of the 23S rRNA, where it nucleates assembly of the 50S subunit. Functionally, one of the proteins that surrounds the polypeptide exit tunnel on the outside of the subunit. In Streptococcus agalactiae serotype III (strain NEM316), this protein is Large ribosomal subunit protein uL24.